Consider the following 61-residue polypeptide: Conotoxin Am14.1 (61 aa).

2 consecutive propeptides follow at residues 1–19 (MLSV…HLPR) and 52–61 (KRDLDLFTDQ).

Mostly non-hydroxylated. In terms of processing, contains 2 disulfide bonds. As to expression, expressed by the venom duct.

The protein localises to the secreted. Probable toxin that inhibits ion channels. In Conus amadis (Amadis cone), this protein is Conotoxin Am14.1.